The primary structure comprises 548 residues: Chaperonin GroEL (548 aa).

Residues threonine 30–proline 33, lysine 51, aspartate 87–threonine 91, glycine 415, asparagine 479–alanine 481, and aspartate 495 each bind ATP.

Belongs to the chaperonin (HSP60) family. In terms of assembly, forms a cylinder of 14 subunits composed of two heptameric rings stacked back-to-back. Interacts with the co-chaperonin GroES.

The protein resides in the cytoplasm. It catalyses the reaction ATP + H2O + a folded polypeptide = ADP + phosphate + an unfolded polypeptide.. In terms of biological role, together with its co-chaperonin GroES, plays an essential role in assisting protein folding. The GroEL-GroES system forms a nano-cage that allows encapsulation of the non-native substrate proteins and provides a physical environment optimized to promote and accelerate protein folding. The sequence is that of Chaperonin GroEL from Pectobacterium carotovorum subsp. carotovorum (strain PC1).